The sequence spans 149 residues: Active regulator of SIRT1 (149 aa).

Residues 1-64 (MSVSLLRKGL…GLRHDQKATA (64 aa)) form a disordered region. Residues 8-19 (KGLDLLREERSG) are compositionally biased toward basic and acidic residues. Low complexity predominate over residues 30–41 (SSKPKPCLSSSK). Residues 43-52 (GMRKQLRRLK) show a composition bias toward basic residues.

The protein belongs to the AROS family. As to quaternary structure, part of the small subunit (SSU) processome, composed of more than 70 proteins and the RNA chaperone small nucleolar RNA (snoRNA) U3.

The protein localises to the nucleus. Its subcellular location is the nucleolus. Its function is as follows. Part of the small subunit (SSU) processome, first precursor of the small eukaryotic ribosomal subunit. During the assembly of the SSU processome in the nucleolus, many ribosome biogenesis factors, an RNA chaperone and ribosomal proteins associate with the nascent pre-rRNA and work in concert to generate RNA folding, modifications, rearrangements and cleavage as well as targeted degradation of pre-ribosomal RNA by the RNA exosome. Acts as a chaperone that specifically mediates the integration of RPS19 in state post-A1. Direct regulator of SIRT1. This is Active regulator of SIRT1 (rps19bp1) from Xenopus tropicalis (Western clawed frog).